The chain runs to 224 residues: 7-cyano-7-deazaguanine synthase (224 aa).

10-20 (LSGGLDSATVV) serves as a coordination point for ATP. 4 residues coordinate Zn(2+): C189, C199, C202, and C205.

It belongs to the QueC family. Zn(2+) is required as a cofactor.

The catalysed reaction is 7-carboxy-7-deazaguanine + NH4(+) + ATP = 7-cyano-7-deazaguanine + ADP + phosphate + H2O + H(+). Its pathway is purine metabolism; 7-cyano-7-deazaguanine biosynthesis. Its function is as follows. Catalyzes the ATP-dependent conversion of 7-carboxy-7-deazaguanine (CDG) to 7-cyano-7-deazaguanine (preQ(0)). In Pseudomonas putida (strain ATCC 700007 / DSM 6899 / JCM 31910 / BCRC 17059 / LMG 24140 / F1), this protein is 7-cyano-7-deazaguanine synthase.